A 1209-amino-acid chain; its full sequence is Protein phosphatase 1 regulatory subunit 26 (1209 aa).

Disordered regions lie at residues 57 to 91 (DGAA…TVHK), 145 to 279 (SGAA…HRQG), 291 to 471 (KPPR…VERS), 501 to 532 (GSDG…DSDD), 555 to 694 (GESC…EDLD), 733 to 836 (EQLG…SNDS), 848 to 1033 (KAKE…FAHQ), 1052 to 1072 (RGGV…GLPS), and 1118 to 1209 (AFRE…VVKV). Positions 63 to 91 (TSDERAAQRGHRAEGCHDARPAAKPTVHK) are enriched in basic and acidic residues. A compositionally biased stretch (low complexity) spans 201–219 (QVGSSKDQGSASPVSVSSD). The span at 226-255 (IRAEIEQFLNEKRQHETQKCDGSVEKKPDT) shows a compositional bias: basic and acidic residues. The segment covering 301-321 (QPRSLRSKVTTTQENEGSTKP) has biased composition (polar residues). Positions 352 to 362 (SAAQASEASDS) are enriched in low complexity. A compositionally biased stretch (basic and acidic residues) spans 442 to 454 (DTDHAPKLLKETK). 3 stretches are compositionally biased toward basic and acidic residues: residues 609 to 637 (KMQE…RRDL), 667 to 685 (KTDE…DKSS), and 757 to 766 (SKRDSGEGPG). Composition is skewed to low complexity over residues 821–836 (PGSL…SNDS) and 852–861 (SVSSSEVQAE). A Phosphoserine modification is found at Ser1161. Residues 1187 to 1209 (GSDASDFSDTSTEDSGGSSVVKV) show a composition bias toward low complexity.

In terms of assembly, interacts with UTP20 and PPP1CA. As to expression, ubiquitous in normal tissues. Expressed in numerous adenocarcinoma cell lines.

The protein localises to the nucleus. The protein resides in the nucleolus. Its function is as follows. Inhibits phosphatase activity of protein phosphatase 1 (PP1) complexes. May positively regulate cell proliferation. The chain is Protein phosphatase 1 regulatory subunit 26 (PPP1R26) from Homo sapiens (Human).